The following is a 580-amino-acid chain: 2-succinyl-5-enolpyruvyl-6-hydroxy-3-cyclohexene-1-carboxylate synthase (580 aa).

The protein belongs to the TPP enzyme family. MenD subfamily. In terms of assembly, homodimer. Mg(2+) serves as cofactor. Mn(2+) is required as a cofactor. It depends on thiamine diphosphate as a cofactor.

The enzyme catalyses isochorismate + 2-oxoglutarate + H(+) = 5-enolpyruvoyl-6-hydroxy-2-succinyl-cyclohex-3-ene-1-carboxylate + CO2. It participates in quinol/quinone metabolism; 1,4-dihydroxy-2-naphthoate biosynthesis; 1,4-dihydroxy-2-naphthoate from chorismate: step 2/7. Its pathway is quinol/quinone metabolism; menaquinone biosynthesis. Catalyzes the thiamine diphosphate-dependent decarboxylation of 2-oxoglutarate and the subsequent addition of the resulting succinic semialdehyde-thiamine pyrophosphate anion to isochorismate to yield 2-succinyl-5-enolpyruvyl-6-hydroxy-3-cyclohexene-1-carboxylate (SEPHCHC). The sequence is that of 2-succinyl-5-enolpyruvyl-6-hydroxy-3-cyclohexene-1-carboxylate synthase from Listeria innocua serovar 6a (strain ATCC BAA-680 / CLIP 11262).